The sequence spans 981 residues: Colossin-C (981 aa).

Residues 1–23 (MKILYSLLLISSIILNTVLNISS) form the signal peptide. N-linked (GlcNAc...) asparagine glycosylation is present at asparagine 63. A disordered region spans residues 172–195 (EQTQPPTQPPTQPPTQPPTPPPFT). Pro residues predominate over residues 177 to 194 (PTQPPTQPPTQPPTPPPF). Asparagine 222, asparagine 591, and asparagine 811 each carry an N-linked (GlcNAc...) asparagine glycan.

This sequence belongs to the serine-aspartate repeat-containing protein (SDr) family.

The protein resides in the secreted. The chain is Colossin-C (colC) from Dictyostelium discoideum (Social amoeba).